An 88-amino-acid polypeptide reads, in one-letter code: Probable glutaredoxin ssr2061 (88 aa).

A disulfide bridge links C15 with C18.

This sequence belongs to the glutaredoxin family.

Functionally, has a glutathione-disulfide oxidoreductase activity in the presence of NADPH and glutathione reductase. Reduces low molecular weight disulfides and proteins. This Synechocystis sp. (strain ATCC 27184 / PCC 6803 / Kazusa) protein is Probable glutaredoxin ssr2061.